Reading from the N-terminus, the 174-residue chain is Co-chaperone protein HscB homolog (174 aa).

The region spanning 2 to 74 (NYFELFSLLP…IQRAEHLLAL (73 aa)) is the J domain.

Belongs to the HscB family. Interacts with HscA and stimulates its ATPase activity.

In terms of biological role, co-chaperone involved in the maturation of iron-sulfur cluster-containing proteins. Seems to help targeting proteins to be folded toward HscA. The sequence is that of Co-chaperone protein HscB homolog from Shewanella pealeana (strain ATCC 700345 / ANG-SQ1).